The sequence spans 147 residues: Probable disulfide formation protein (147 aa).

Residues asparagine 9–tyrosine 28 traverse the membrane as a helical segment. A disulfide bridge connects residues cysteine 38 and cysteine 41. 2 consecutive transmembrane segments (helical) span residues tyrosine 43 to threonine 62 and tyrosine 69 to leucine 86. Cysteine 99 and cysteine 106 form a disulfide bridge. A helical membrane pass occupies residues glycine 115–phenylalanine 138.

It belongs to the DsbB family. BdbC subfamily.

It localises to the cell inner membrane. Its function is as follows. Required for disulfide bond formation in some proteins. This chain is Probable disulfide formation protein, found in Coxiella burnetii (strain CbuG_Q212) (Coxiella burnetii (strain Q212)).